Consider the following 401-residue polypeptide: Argininosuccinate synthase (401 aa).

Residue 9 to 17 (AYSGGLDTS) participates in ATP binding. Tyr88 is a binding site for L-citrulline. An ATP-binding site is contributed by Gly118. Thr120, Asn124, and Asp125 together coordinate L-aspartate. An L-citrulline-binding site is contributed by Asn124. L-citrulline is bound by residues Arg128, Ser177, Ser186, Glu262, and Tyr274.

This sequence belongs to the argininosuccinate synthase family. Type 1 subfamily. In terms of assembly, homotetramer.

It is found in the cytoplasm. The enzyme catalyses L-citrulline + L-aspartate + ATP = 2-(N(omega)-L-arginino)succinate + AMP + diphosphate + H(+). The protein operates within amino-acid biosynthesis; L-arginine biosynthesis; L-arginine from L-ornithine and carbamoyl phosphate: step 2/3. The polypeptide is Argininosuccinate synthase (Chlorobaculum tepidum (strain ATCC 49652 / DSM 12025 / NBRC 103806 / TLS) (Chlorobium tepidum)).